The following is a 432-amino-acid chain: Short/branched chain specific acyl-CoA dehydrogenase, mitochondrial (432 aa).

The transit peptide at 1–33 (MERATVRLLRGGALLRRNFPSCLSSWKTPPHAL) directs the protein to the mitochondrion. The residue at position 70 (Lys70) is an N6-acetyllysine; alternate. Lys70 carries the N6-succinyllysine; alternate modification. FAD-binding positions include 174-183 (ICISETGAGS) and 207-209 (WIS). Ser183 provides a ligand contact to substrate. Ser183 is subject to Phosphoserine. Substrate contacts are provided by Tyr229 and Tyr283. Lys284 carries the post-translational modification N6-acetyllysine; alternate. N6-succinyllysine; alternate is present on Lys284. 291 to 294 (NEGR) contacts substrate. FAD is bound by residues Arg319, Gln330, and 387–391 (EWMGG). Glu414 acts as the Proton acceptor in catalysis. 416–418 (TSN) provides a ligand contact to FAD. Lys426 is subject to N6-acetyllysine.

This sequence belongs to the acyl-CoA dehydrogenase family. Homotetramer. Requires FAD as cofactor.

The protein resides in the mitochondrion matrix. It carries out the reaction 2-methylbutanoyl-CoA + oxidized [electron-transfer flavoprotein] + H(+) = (2E)-2-methylbut-2-enoyl-CoA + reduced [electron-transfer flavoprotein]. The catalysed reaction is (2S)-2-methylbutanoyl-CoA + oxidized [electron-transfer flavoprotein] + H(+) = (2E)-2-methylbut-2-enoyl-CoA + reduced [electron-transfer flavoprotein]. The enzyme catalyses (2R)-2-methylbutanoyl-CoA + oxidized [electron-transfer flavoprotein] + H(+) = ethylacryloyl-CoA + reduced [electron-transfer flavoprotein]. It catalyses the reaction butanoyl-CoA + oxidized [electron-transfer flavoprotein] + H(+) = (2E)-butenoyl-CoA + reduced [electron-transfer flavoprotein]. It carries out the reaction 2-methylpropanoyl-CoA + oxidized [electron-transfer flavoprotein] + H(+) = 2-methylpropenoyl-CoA + reduced [electron-transfer flavoprotein]. The catalysed reaction is hexanoyl-CoA + oxidized [electron-transfer flavoprotein] + H(+) = (2E)-hexenoyl-CoA + reduced [electron-transfer flavoprotein]. The enzyme catalyses valproyl-CoA + oxidized [electron-transfer flavoprotein] + H(+) = (2E)-2-propylpent-2-enoyl-CoA + reduced [electron-transfer flavoprotein]. It functions in the pathway lipid metabolism; mitochondrial fatty acid beta-oxidation. The protein operates within amino-acid degradation; L-isoleucine degradation. In terms of biological role, short and branched chain specific acyl-CoA dehydrogenase that catalyzes the removal of one hydrogen from C-2 and C-3 of the fatty acyl-CoA thioester, resulting in the formation of trans-2-enoyl-CoA. Among the different mitochondrial acyl-CoA dehydrogenases, acts specifically on short and branched chain acyl-CoA derivatives such as (S)-2-methylbutyryl-CoA as well as short straight chain acyl-CoAs such as butyryl-CoA. Plays an important role in the metabolism of L-isoleucine by catalyzing the dehydrogenation of 2-methylbutyryl-CoA, one of the steps of the L-isoleucine catabolic pathway. Can also act on valproyl-CoA, a metabolite of the valproic acid drug. The sequence is that of Short/branched chain specific acyl-CoA dehydrogenase, mitochondrial (ACADSB) from Bos taurus (Bovine).